Reading from the N-terminus, the 549-residue chain is Glucose-6-phosphate isomerase (549 aa).

Lysine 80, lysine 228, and lysine 234 each carry N6-acetyllysine. The active-site Proton donor is the glutamate 355. Active-site residues include histidine 386 and lysine 514.

This sequence belongs to the GPI family.

The protein resides in the cytoplasm. It carries out the reaction alpha-D-glucose 6-phosphate = beta-D-fructose 6-phosphate. Its pathway is carbohydrate biosynthesis; gluconeogenesis. It functions in the pathway carbohydrate degradation; glycolysis; D-glyceraldehyde 3-phosphate and glycerone phosphate from D-glucose: step 2/4. Its function is as follows. Catalyzes the reversible isomerization of glucose-6-phosphate to fructose-6-phosphate. This is Glucose-6-phosphate isomerase from Escherichia coli O127:H6 (strain E2348/69 / EPEC).